The following is a 572-amino-acid chain: DBH-like monooxygenase protein 2 homolog (572 aa).

The signal sequence occupies residues 1–26; that stretch reads MGTCLKGNMSVLSLVLFLLSVQQFWA. N-linked (GlcNAc...) asparagine glycans are attached at residues asparagine 8, asparagine 64, asparagine 187, and asparagine 203. At 27-552 the chain is on the extracellular side; the sequence is QEDPLLPFSE…SPPEPCVRAC (526 aa). The 116-residue stretch at 42–157 folds into the DOMON domain; the sequence is HNVQLKWGFD…LPMKLIYAYG (116 aa). The active site involves tyrosine 207. 2 disulfide bridges follow: cysteine 209-cysteine 256 and cysteine 244-cysteine 263. Histidine 237 and histidine 238 together coordinate Cu cation. Histidine 301 is a Cu cation binding site. Asparagine 306 carries N-linked (GlcNAc...) asparagine glycosylation. 2 cysteine pairs are disulfide-bonded: cysteine 358/cysteine 472 and cysteine 435/cysteine 457. Histidine 381 is a catalytic residue. Residues histidine 381, histidine 383, and methionine 456 each contribute to the Cu cation site. Asparagine 468, asparagine 503, asparagine 518, and asparagine 534 each carry an N-linked (GlcNAc...) asparagine glycan. The helical transmembrane segment at 553–571 threads the bilayer; the sequence is ATKNLAFMSLFLCLAGMWA. Position 572 (serine 572) is a topological domain, cytoplasmic.

It belongs to the copper type II ascorbate-dependent monooxygenase family. Cu(2+) serves as cofactor.

The protein localises to the membrane. The protein is DBH-like monooxygenase protein 2 homolog (moxd2) of Danio rerio (Zebrafish).